A 220-amino-acid chain; its full sequence is Cytidylate kinase (220 aa).

10 to 18 provides a ligand contact to ATP; sequence GPAGAGKST.

This sequence belongs to the cytidylate kinase family. Type 1 subfamily.

The protein localises to the cytoplasm. It carries out the reaction CMP + ATP = CDP + ADP. It catalyses the reaction dCMP + ATP = dCDP + ADP. The polypeptide is Cytidylate kinase (Alkaliphilus metalliredigens (strain QYMF)).